We begin with the raw amino-acid sequence, 688 residues long: Elongation factor G (688 aa).

Residues 8-282 form the tr-type G domain; sequence EKFRNIGIMA…AVVDFMPSPL (275 aa). GTP contacts are provided by residues 17-24, 81-85, and 135-138; these read AHIDAGKT, DTPGH, and NKMD. The disordered stretch occupies residues 282-305; that stretch reads LDIPPIKGTDPETGEETDRPADDN.

The protein belongs to the TRAFAC class translation factor GTPase superfamily. Classic translation factor GTPase family. EF-G/EF-2 subfamily.

The protein resides in the cytoplasm. Functionally, catalyzes the GTP-dependent ribosomal translocation step during translation elongation. During this step, the ribosome changes from the pre-translocational (PRE) to the post-translocational (POST) state as the newly formed A-site-bound peptidyl-tRNA and P-site-bound deacylated tRNA move to the P and E sites, respectively. Catalyzes the coordinated movement of the two tRNA molecules, the mRNA and conformational changes in the ribosome. This is Elongation factor G from Clostridium kluyveri (strain NBRC 12016).